The chain runs to 231 residues: Urease subunit gamma/beta (231 aa).

The tract at residues 1–101 (MLLTPTELER…LVTVHQPIRP (101 aa)) is urease gamma. The urease beta stretch occupies residues 102–231 (GKLPLAVMPT…RARAQHFKGA (130 aa)).

This sequence in the N-terminal section; belongs to the urease gamma subunit family. It in the C-terminal section; belongs to the urease beta subunit family. As to quaternary structure, heterohexamer of 3 UreC (alpha) and 3 UreAB (gamma/beta) subunits.

It is found in the cytoplasm. It catalyses the reaction urea + 2 H2O + H(+) = hydrogencarbonate + 2 NH4(+). It participates in nitrogen metabolism; urea degradation; CO(2) and NH(3) from urea (urease route): step 1/1. The chain is Urease subunit gamma/beta from Pseudomonas syringae pv. tomato (strain ATCC BAA-871 / DC3000).